The primary structure comprises 150 residues: uncharacterized protein (150 aa).

The segment at 49-88 (KEWAENASTDEIDDFLTHDDETERDADPSSGSGPELMNKA) is disordered. Residues 63–75 (FLTHDDETERDAD) show a composition bias toward basic and acidic residues.

This is an uncharacterized protein from Bacillus subtilis (strain 168).